The following is a 21-amino-acid chain: Testis ecdysiotropin peptide 1 (21 aa).

Positions 1-21 (ISDFDEYEPLNDADNNEVLDF) are disordered.

In terms of biological role, start or boost ecdysteroid synthesis in testis of larvae and pupae. The sequence is that of Testis ecdysiotropin peptide 1 from Lymantria dispar (Gypsy moth).